The primary structure comprises 309 residues: Homoserine kinase (309 aa).

ATP is bound at residue 91 to 101 (PIGSGLGSSAC).

The protein belongs to the GHMP kinase family. Homoserine kinase subfamily.

The protein resides in the cytoplasm. It catalyses the reaction L-homoserine + ATP = O-phospho-L-homoserine + ADP + H(+). Its pathway is amino-acid biosynthesis; L-threonine biosynthesis; L-threonine from L-aspartate: step 4/5. Its function is as follows. Catalyzes the ATP-dependent phosphorylation of L-homoserine to L-homoserine phosphate. The sequence is that of Homoserine kinase from Salmonella dublin (strain CT_02021853).